The following is a 290-amino-acid chain: Glutamate racemase (290 aa).

Residues 24 to 25 (DS) and 56 to 57 (YG) contribute to the substrate site. Catalysis depends on C87, which acts as the Proton donor/acceptor. 88 to 89 (NT) lines the substrate pocket. Catalysis depends on C199, which acts as the Proton donor/acceptor. Substrate is bound at residue 200–201 (TH). A disordered region spans residues 271–290 (GADGASLPDPPSPRIELTTT).

It belongs to the aspartate/glutamate racemases family.

The enzyme catalyses L-glutamate = D-glutamate. The protein operates within cell wall biogenesis; peptidoglycan biosynthesis. Its function is as follows. Provides the (R)-glutamate required for cell wall biosynthesis. In Deinococcus radiodurans (strain ATCC 13939 / DSM 20539 / JCM 16871 / CCUG 27074 / LMG 4051 / NBRC 15346 / NCIMB 9279 / VKM B-1422 / R1), this protein is Glutamate racemase.